We begin with the raw amino-acid sequence, 673 residues long: Xyloglucan glycosyltransferase 4 (673 aa).

The next 2 membrane-spanning stretches (helical) occupy residues 90 to 110 and 144 to 164; these read FIKA…VAHF and IAPL…IQSL. D238 is an active-site residue. The substrate site is built by D297 and D299. Residue D391 is part of the active site. 2 consecutive transmembrane segments (helical) span residues 469 to 489 and 494 to 514; these read LILP…TMFI and LPLW…ILPS. S581 carries the phosphoserine modification. A run of 2 helical transmembrane segments spans residues 623–643 and 648–668; these read VFKK…RSFL and LHFY…LDLI.

Belongs to the glycosyltransferase 2 family. Plant cellulose synthase-like C subfamily. In terms of assembly, homodimer. Interacts with XXT5. Interacts with FUT1, MUR3 and XLT2. In terms of tissue distribution, expressed in seedlings, roots, leaves, stems, flowers and seeds.

Its subcellular location is the golgi apparatus membrane. In terms of biological role, beta-1,4-glucan synthase rather involved in the synthesis of the xyloglucan backbone than cellulose. Seems to work simultaneously with xyloglucan 6-xylosyltransferase. Xyloglucan is a noncellulosic polysaccharides of plant cell wall and consists of a glucan backbone substituted by xylose, galactose and fucose. Associates with other xyloglucan-synthesizing enzymes to form multiprotein complexes for xyloglucan synthesis in the Golgi. This is Xyloglucan glycosyltransferase 4 from Arabidopsis thaliana (Mouse-ear cress).